The sequence spans 700 residues: Elongation factor G (700 aa).

A tr-type G domain is found at 10–286; sequence NKVRNIGIMA…AVIDYLPNPL (277 aa). Residues 19 to 26, 83 to 87, and 137 to 140 contribute to the GTP site; these read AHIDAGKT, DTPGH, and NKMD.

This sequence belongs to the TRAFAC class translation factor GTPase superfamily. Classic translation factor GTPase family. EF-G/EF-2 subfamily.

The protein resides in the cytoplasm. Functionally, catalyzes the GTP-dependent ribosomal translocation step during translation elongation. During this step, the ribosome changes from the pre-translocational (PRE) to the post-translocational (POST) state as the newly formed A-site-bound peptidyl-tRNA and P-site-bound deacylated tRNA move to the P and E sites, respectively. Catalyzes the coordinated movement of the two tRNA molecules, the mRNA and conformational changes in the ribosome. The polypeptide is Elongation factor G (Rhodococcus erythropolis (strain PR4 / NBRC 100887)).